A 153-amino-acid chain; its full sequence is Gastric inhibitory polypeptide (153 aa).

The first 21 residues, 1-21 (MVATKTFALLLLSLFLAVGLG), serve as a signal peptide directing secretion. 2 consecutive propeptides follow at residues 22-50 (EKKE…PRGP) and 95-153 (EARA…LRSR). The segment at 102–125 (ASQANRKEEEAVEPQSSPAKNPSD) is disordered.

It belongs to the glucagon family.

It localises to the secreted. In terms of biological role, potent stimulator of insulin secretion and relatively poor inhibitor of gastric acid secretion. This is Gastric inhibitory polypeptide (GIP) from Homo sapiens (Human).